We begin with the raw amino-acid sequence, 1216 residues long: Histone-lysine N-methyltransferase SETDB1-B (1216 aa).

Positions 38–61 (KADLEQLQEWVEQREKEVADIDAL) form a coiled coil. 2 Tudor domains span residues 266-329 (RLFV…LKKT) and 356-412 (LLKP…NLKM). The segment at 417 to 513 (SQEKKMAGQQ…QGMPSDLQPK (97 aa)) is disordered. The span at 467-478 (PVAPQPAGPPQP) shows a compositional bias: pro residues. The span at 482–498 (ESPSFKSQMAKKSTGQL) shows a compositional bias: polar residues. Residues 595 to 666 (HRGRNPLLTP…EMFCLDPYVL (72 aa)) form the MBD domain. Positions 728–801 (VGCDCTDGCR…MCTNRLVQHG (74 aa)) constitute a Pre-SET domain. Zn(2+) contacts are provided by cysteine 730, cysteine 732, cysteine 736, cysteine 742, cysteine 744, cysteine 782, cysteine 786, cysteine 788, and cysteine 793. One can recognise an SET domain in the interval 804-1179 (VRLQLFKTQN…AGTELTWDYN (376 aa)). Residues 814–816 (KGW), aspartate 852, and tyrosine 854 contribute to the S-adenosyl-L-methionine site. Disordered regions lie at residues 892-944 (LPAS…DTFV), 961-1057 (RRQA…KTQA), and 1081-1108 (KSGGGGAGGGGSGPSHGHGGGGGDNGPK). Acidic residues predominate over residues 918–940 (DSSEESDDEKDDDSNEDDSDSSD). 2 stretches are compositionally biased toward basic and acidic residues: residues 966–976 (GLKEESQDSKD) and 983–997 (GEDRKPPHMPEETGK). The segment covering 1003–1016 (WLTNQSSTSANQSV) has biased composition (polar residues). Basic and acidic residues-rich tracts occupy residues 1020-1029 (GGIKTEKKDV) and 1046-1055 (DDNKEREKKT). The segment covering 1082-1105 (SGGGGAGGGGSGPSHGHGGGGGDN) has biased composition (gly residues). S-adenosyl-L-methionine contacts are provided by residues arginine 1133 and 1136 to 1137 (NH). Zn(2+) contacts are provided by cysteine 1139, cysteine 1192, cysteine 1194, and cysteine 1199. In terms of domain architecture, Post-SET spans 1188-1204 (KELLCCCGSTECRGRLL).

This sequence belongs to the class V-like SAM-binding methyltransferase superfamily. Histone-lysine methyltransferase family. Suvar3-9 subfamily.

It is found in the nucleus. It localises to the chromosome. The catalysed reaction is L-lysyl(4)-[histone H3] + 3 S-adenosyl-L-methionine = N(6),N(6),N(6)-trimethyl-L-lysyl(4)-[histone H3] + 3 S-adenosyl-L-homocysteine + 3 H(+). In terms of biological role, histone methyltransferase that specifically trimethylates 'Lys-9' of histone H3. H3 'Lys-9' trimethylation represents a specific tag for epigenetic transcriptional repression by recruiting HP1 (CBX1, CBX3 and/or CBX5) proteins to methylated histones. Mainly functions in euchromatin regions, thereby playing a central role in the silencing of euchromatic genes. H3 'Lys-9' trimethylation is coordinated with DNA methylation. Plays a role in promoter hypermethylation and transcriptional silencing of tumor suppressor genes (TSGs) or other tumor-related genes. Also required to maintain a transcriptionally repressive state of genes in undifferentiated embryonic stem cells (ESCs). Associates at promoter regions of tumor suppressor genes (TSGs) leading to their gene silencing. The chain is Histone-lysine N-methyltransferase SETDB1-B (setdb1b) from Danio rerio (Zebrafish).